A 192-amino-acid chain; its full sequence is Orotate phosphoribosyltransferase (192 aa).

116–124 serves as a coordination point for 5-phospho-alpha-D-ribose 1-diphosphate; sequence EDIVTTGLS. Positions 120 and 148 each coordinate orotate.

This sequence belongs to the purine/pyrimidine phosphoribosyltransferase family. PyrE subfamily. Homodimer. Requires Mg(2+) as cofactor.

The enzyme catalyses orotidine 5'-phosphate + diphosphate = orotate + 5-phospho-alpha-D-ribose 1-diphosphate. It functions in the pathway pyrimidine metabolism; UMP biosynthesis via de novo pathway; UMP from orotate: step 1/2. Catalyzes the transfer of a ribosyl phosphate group from 5-phosphoribose 1-diphosphate to orotate, leading to the formation of orotidine monophosphate (OMP). The protein is Orotate phosphoribosyltransferase of Bartonella bacilliformis (strain ATCC 35685 / KC583 / Herrer 020/F12,63).